Here is a 208-residue protein sequence, read N- to C-terminus: MRNVTAAGRNVDEAVQSGLQELGLTKDKVEITVIEEGNKGFLGIFGKKPAIVKLVEKIDPIQQAKLYLQTIAEAIAGKSDVTVQESKKTVRYHITGEKAALLIGKRGQTLNALETLTQLALNRYPGQYKNVTVDAENYRLKRKETLSQLAIKLADQVLKTKKSIQLEPMPSSERKIIHDTLSGYANHQIKTYSMGEGENRHLVISHKR.

Residues threonine 5–valine 55 are jag_N domain. The KH domain occupies isoleucine 58 to alanine 135. Residues leucine 140 to arginine 208 form the R3H domain.

It belongs to the KhpB RNA-binding protein family. In terms of assembly, forms a complex with KhpA.

It localises to the cytoplasm. Its function is as follows. A probable RNA chaperone. Forms a complex with KhpA which binds to cellular RNA and controls its expression. Plays a role in peptidoglycan (PG) homeostasis and cell length regulation. The chain is RNA-binding protein KhpB from Bacillus subtilis (strain 168).